A 234-amino-acid polypeptide reads, in one-letter code: Adenosine 5'-phosphosulfate reductase (234 aa).

Positions 120, 121, 203, and 206 each coordinate [4Fe-4S] cluster. Cys-229 (nucleophile; cysteine thiosulfonate intermediate) is an active-site residue.

Belongs to the PAPS reductase family. CysH subfamily. The cofactor is [4Fe-4S] cluster.

The protein localises to the cytoplasm. The catalysed reaction is [thioredoxin]-disulfide + sulfite + AMP + 2 H(+) = adenosine 5'-phosphosulfate + [thioredoxin]-dithiol. It functions in the pathway sulfur metabolism; hydrogen sulfide biosynthesis; sulfite from sulfate. Catalyzes the formation of sulfite from adenosine 5'-phosphosulfate (APS) using thioredoxin as an electron donor. This Bacillus cytotoxicus (strain DSM 22905 / CIP 110041 / 391-98 / NVH 391-98) protein is Adenosine 5'-phosphosulfate reductase.